Reading from the N-terminus, the 156-residue chain is Arginine repressor (156 aa).

It belongs to the ArgR family.

It is found in the cytoplasm. The protein operates within amino-acid biosynthesis; L-arginine biosynthesis [regulation]. Regulates arginine biosynthesis genes. The polypeptide is Arginine repressor (Klebsiella pneumoniae (strain 342)).